We begin with the raw amino-acid sequence, 756 residues long: MEQKFKKGKDHGVGVLTSGGDSQGMNAAVRSVVRETIRQGHRCYLIREGYNGLINGNIELAKWAHVANVTHLGGSMIGTSRCDEFRTTDGRKKAAAIMFDKRIFHLIVIGGDGSLMGAQKLKEEWGRFGEELFAEGKITEEVANEGRELHLAGIVGSIDNDCIESDKSIGSDTALHRICEAIDGLVMTAQSHQRVFVVEVMGRHCGYLALTAAIAVEADYVFYPEIPPDEKWPEQLCHQLGSVRKMGKRQNVIILGEGVTNSKGQRIDVRQVKEEIETRLQLEVRIATLGHLQRGGAPSFLDRLIGLRMGYEAVQEVLKGKEEKEGAVVTGQKTIAKVMCLRGHNIQRNELSRVIRQTETANEEIMQRHSDLACRLRGFGFLDKQTYLNFVSIPLSTTMPSRTKTFAVVHIGSPCAGMNAATYSFTRMANHSGIQVIGIKHGWDGLKNKDVKLLTWANVQGWAQFGGSMLGTKRQLPSEMDLIAEGLNSNNVDGLVIIGGFMAFESALILQQNRSEYTCLSIPIVVIPATISNNCPGTCMSLGVDTALNEICRQVDNISQNAIGSKNKVMIIETMGSRSGFLATMTALSTGSQFALIRQVETNEKDLEKLAIETKERLDSGNLEKFLLIRSEGASDEIYSPDVKKIFDKVMKNKYGVRITNLGYSQLGGHPSCFDRQMGIRMGVRAFEGIVNPVKMGDRDCCVIGLRGSSLRYVPVQGLGKKVCFEHGVPHNMWWLDLHPLVEAMTKKPQEAVLSS.

The interval 1–393 (MEQKFKKGKD…KQTYLNFVSI (393 aa)) is N-terminal catalytic PFK domain 1. ATP contacts are provided by residues Gly20, 81–82 (RC), and 111–114 (GDGS). Mg(2+) is bound at residue Asp112. Substrate-binding positions include 157 to 159 (SID), Arg194, 201 to 203 (MGR), Glu257, Arg285, and 291 to 294 (HLQR). Asp159 serves as the catalytic Proton acceptor. The segment at 394–404 (PLSTTMPSRTK) is interdomain linker. The interval 405 to 756 (TFAVVHIGSP…KKPQEAVLSS (352 aa)) is C-terminal regulatory PFK domain 2. Beta-D-fructose 2,6-bisphosphate is bound by residues Arg474, 530–534 (TISNN), 575–577 (MGS), Glu632, Arg658, and 664–667 (YSQL).

Belongs to the phosphofructokinase type A (PFKA) family. ATP-dependent PFK group I subfamily. Eukaryotic two domain clade 'E' sub-subfamily. As to quaternary structure, homotetramer. The cofactor is Mg(2+).

Its subcellular location is the cytoplasm. It carries out the reaction beta-D-fructose 6-phosphate + ATP = beta-D-fructose 1,6-bisphosphate + ADP + H(+). Its pathway is carbohydrate degradation; glycolysis; D-glyceraldehyde 3-phosphate and glycerone phosphate from D-glucose: step 3/4. Its activity is regulated as follows. Allosterically activated by ADP, AMP, or fructose 2,6-bisphosphate, and allosterically inhibited by ATP or citrate. Catalyzes the phosphorylation of D-fructose 6-phosphate to fructose 1,6-bisphosphate by ATP, the first committing step of glycolysis. This chain is ATP-dependent 6-phosphofructokinase 2, found in Caenorhabditis elegans.